The chain runs to 181 residues: Inner membrane-spanning protein YciB (181 aa).

Helical transmembrane passes span 10–30, 50–70, 80–100, 118–138, and 148–168; these read LVIF…GALI, MHLI…ILHD, IVYA…KPIL, VTWY…YVAF, and FKVF…VFYL.

This sequence belongs to the YciB family.

The protein resides in the cell inner membrane. In terms of biological role, plays a role in cell envelope biogenesis, maintenance of cell envelope integrity and membrane homeostasis. This is Inner membrane-spanning protein YciB from Shewanella piezotolerans (strain WP3 / JCM 13877).